The chain runs to 342 residues: Pre-mRNA-splicing factor 18 (342 aa).

The residue at position 1 (M1) is an N-acetylmethionine.

Belongs to the PRP18 family. Heterodimer with PPIH. Interacts with PRPF4 and with the spliceosome. Part of a complex containing U4/U6 snRNPs.

The protein localises to the nucleus speckle. Participates in the second step of pre-mRNA splicing. This Pongo abelii (Sumatran orangutan) protein is Pre-mRNA-splicing factor 18 (PRPF18).